Here is a 397-residue protein sequence, read N- to C-terminus: Enoyl-[acyl-carrier-protein] reductase [NADH] (397 aa).

NAD(+) is bound by residues 48 to 53 (GASTGY), 74 to 75 (FE), 111 to 112 (DA), and 139 to 140 (VA). Tyr-225 lines the substrate pocket. Tyr-235 acts as the Proton donor in catalysis. Residues Lys-244 and 273 to 275 (VVT) contribute to the NAD(+) site.

Belongs to the TER reductase family. As to quaternary structure, monomer.

The enzyme catalyses a 2,3-saturated acyl-[ACP] + NAD(+) = a (2E)-enoyl-[ACP] + NADH + H(+). Its pathway is lipid metabolism; fatty acid biosynthesis. Involved in the final reduction of the elongation cycle of fatty acid synthesis (FAS II). Catalyzes the reduction of a carbon-carbon double bond in an enoyl moiety that is covalently linked to an acyl carrier protein (ACP). This is Enoyl-[acyl-carrier-protein] reductase [NADH] from Burkholderia thailandensis (strain ATCC 700388 / DSM 13276 / CCUG 48851 / CIP 106301 / E264).